Reading from the N-terminus, the 215-residue chain is Ribonuclease T (215 aa).

In terms of domain architecture, Exonuclease spans 20–194 (VVIDVETAGF…YDTERTAVLF (175 aa)). Residues aspartate 23, glutamate 25, histidine 181, and aspartate 186 each contribute to the Mg(2+) site. The active-site Proton donor/acceptor is the histidine 181.

This sequence belongs to the RNase T family. In terms of assembly, homodimer. Mg(2+) is required as a cofactor.

Functionally, trims short 3' overhangs of a variety of RNA species, leaving a one or two nucleotide 3' overhang. Responsible for the end-turnover of tRNA: specifically removes the terminal AMP residue from uncharged tRNA (tRNA-C-C-A). Also appears to be involved in tRNA biosynthesis. The polypeptide is Ribonuclease T (Citrobacter koseri (strain ATCC BAA-895 / CDC 4225-83 / SGSC4696)).